Reading from the N-terminus, the 338-residue chain is Ketol-acid reductoisomerase (NADP(+)) (338 aa).

A KARI N-terminal Rossmann domain is found at Met-1–Thr-181. NADP(+) is bound by residues Tyr-24–Gln-27, Arg-47, Ser-50, Thr-52, and Asp-82–Gln-85. His-107 is an active-site residue. Gly-133 contacts NADP(+). A KARI C-terminal knotted domain is found at Thr-182–Ile-327. Residues Asp-190, Glu-194, Glu-226, and Glu-230 each coordinate Mg(2+). Ser-251 is a substrate binding site.

This sequence belongs to the ketol-acid reductoisomerase family. Requires Mg(2+) as cofactor.

The catalysed reaction is (2R)-2,3-dihydroxy-3-methylbutanoate + NADP(+) = (2S)-2-acetolactate + NADPH + H(+). It catalyses the reaction (2R,3R)-2,3-dihydroxy-3-methylpentanoate + NADP(+) = (S)-2-ethyl-2-hydroxy-3-oxobutanoate + NADPH + H(+). It functions in the pathway amino-acid biosynthesis; L-isoleucine biosynthesis; L-isoleucine from 2-oxobutanoate: step 2/4. Its pathway is amino-acid biosynthesis; L-valine biosynthesis; L-valine from pyruvate: step 2/4. In terms of biological role, involved in the biosynthesis of branched-chain amino acids (BCAA). Catalyzes an alkyl-migration followed by a ketol-acid reduction of (S)-2-acetolactate (S2AL) to yield (R)-2,3-dihydroxy-isovalerate. In the isomerase reaction, S2AL is rearranged via a Mg-dependent methyl migration to produce 3-hydroxy-3-methyl-2-ketobutyrate (HMKB). In the reductase reaction, this 2-ketoacid undergoes a metal-dependent reduction by NADPH to yield (R)-2,3-dihydroxy-isovalerate. This chain is Ketol-acid reductoisomerase (NADP(+)), found in Ectopseudomonas mendocina (strain ymp) (Pseudomonas mendocina).